The following is a 1091-amino-acid chain: Constitutive coactivator of PPAR-gamma-like protein 2 (1091 aa).

Residues 35–53 (QQQHLHRQLPPAALAPGAP) are compositionally biased toward low complexity. Disordered stretches follow at residues 35–105 (QQQH…HPPP), 503–575 (NCLT…SEPH), 966–1010 (SRSS…QGSS), and 1037–1077 (VEEK…KNHV). R57 bears the Omega-N-methylarginine mark. A compositionally biased stretch (basic residues) spans 82-95 (SRHHHPAHHFHHHG). Polar residues predominate over residues 532–544 (GSEQITEAVQQQP). The span at 966–976 (SRSSRSRGSFG) shows a compositional bias: low complexity. R972 is subject to Omega-N-methylarginine. A compositionally biased stretch (basic and acidic residues) spans 1062–1077 (SDDHCLPVKNGEKNHV).

It belongs to the constitutive coactivator of PPAR-gamma family.

This Mus musculus (Mouse) protein is Constitutive coactivator of PPAR-gamma-like protein 2 (Fam120c).